The chain runs to 261 residues: Cytosolic Fe-S cluster assembly factor Nubp2 homolog (261 aa).

ATP is bound at residue 14–21 (GKGGVGKS). [4Fe-4S] cluster is bound by residues C188 and C191.

It belongs to the Mrp/NBP35 ATP-binding proteins family. NUBP2/CFD1 subfamily. As to quaternary structure, heterotetramer of 2 Nubp1 and 2 Nubp2 chains. [4Fe-4S] cluster serves as cofactor.

It localises to the cytoplasm. Component of the cytosolic iron-sulfur (Fe/S) protein assembly (CIA) machinery. Required for maturation of extramitochondrial Fe-S proteins. The Nubp1-Nubp2 heterotetramer forms a Fe-S scaffold complex, mediating the de novo assembly of an Fe-S cluster and its transfer to target apoproteins. This Drosophila ananassae (Fruit fly) protein is Cytosolic Fe-S cluster assembly factor Nubp2 homolog.